Here is an 846-residue protein sequence, read N- to C-terminus: Penicillin G acylase (846 aa).

The first 26 residues, 1-26, serve as a signal peptide directing secretion; that stretch reads MKNRNRMIVNCVTASLMYYWSLPALA. Residue Glu178 coordinates Ca(2+). Residues 236–289 constitute a propeptide, spacer peptide; that stretch reads ALLPRYDLPAPMLDRPAKGADGALLALTAGKNRETIAAQFAQGGANGLAGYPTT. The active-site Nucleophile is the Ser290. Residues Asp362, Val364, Asp365, Pro494, and Asp541 each coordinate Ca(2+).

Belongs to the peptidase S45 family. As to quaternary structure, heterodimer of an alpha subunit and a beta subunit processed from the same precursor. It depends on Ca(2+) as a cofactor.

It is found in the periplasm. It catalyses the reaction a penicillin + H2O = 6-aminopenicillanate + a carboxylate. The polypeptide is Penicillin G acylase (pac) (Escherichia coli).